Consider the following 478-residue polypeptide: Membrane-bound lytic murein transglycosylase F (478 aa).

An N-terminal signal peptide occupies residues methionine 1–alanine 29. The non-LT domain stretch occupies residues serine 30 to isoleucine 269. Residues arginine 271–phenylalanine 478 are LT domain. Residue glutamate 316 is part of the active site.

This sequence in the N-terminal section; belongs to the bacterial solute-binding protein 3 family. The protein in the C-terminal section; belongs to the transglycosylase Slt family.

The protein resides in the cell outer membrane. It catalyses the reaction Exolytic cleavage of the (1-&gt;4)-beta-glycosidic linkage between N-acetylmuramic acid (MurNAc) and N-acetylglucosamine (GlcNAc) residues in peptidoglycan, from either the reducing or the non-reducing ends of the peptidoglycan chains, with concomitant formation of a 1,6-anhydrobond in the MurNAc residue.. Its function is as follows. Murein-degrading enzyme that degrades murein glycan strands and insoluble, high-molecular weight murein sacculi, with the concomitant formation of a 1,6-anhydromuramoyl product. Lytic transglycosylases (LTs) play an integral role in the metabolism of the peptidoglycan (PG) sacculus. Their lytic action creates space within the PG sacculus to allow for its expansion as well as for the insertion of various structures such as secretion systems and flagella. In Nitrosospira multiformis (strain ATCC 25196 / NCIMB 11849 / C 71), this protein is Membrane-bound lytic murein transglycosylase F.